The following is a 202-amino-acid chain: Tetratricopeptide repeat protein 36 (202 aa).

3 TPR repeats span residues 49–82, 83–116, and 121–154; these read AQDL…LPER, ASAY…SGIA, and RQAL…GSDF.

The protein belongs to the TTC36 family.

The protein is Tetratricopeptide repeat protein 36 (ttc36) of Xenopus tropicalis (Western clawed frog).